The primary structure comprises 82 residues: Large ribosomal subunit protein uL23 (82 aa).

It belongs to the universal ribosomal protein uL23 family. Part of the 50S ribosomal subunit. Contacts protein L29.

In terms of biological role, binds to 23S rRNA. One of the proteins that surrounds the polypeptide exit tunnel on the outside of the ribosome. The sequence is that of Large ribosomal subunit protein uL23 from Methanosarcina barkeri (strain Fusaro / DSM 804).